The chain runs to 80 residues: MKTGIKKVKLHVKKNDSVVVISGNDKGKEGKILKVFPIKSRVIVEGVNIRKRHMRPTQGQTQGSIIEREFPIHSSNVKKS.

Residues 53-80 (HMRPTQGQTQGSIIEREFPIHSSNVKKS) are disordered.

This sequence belongs to the universal ribosomal protein uL24 family. In terms of assembly, part of the 50S ribosomal subunit.

Functionally, one of two assembly initiator proteins, it binds directly to the 5'-end of the 23S rRNA, where it nucleates assembly of the 50S subunit. Its function is as follows. One of the proteins that surrounds the polypeptide exit tunnel on the outside of the subunit. This chain is Large ribosomal subunit protein uL24, found in Pelodictyon phaeoclathratiforme (strain DSM 5477 / BU-1).